The primary structure comprises 156 residues: Deoxyuridine 5'-triphosphate nucleotidohydrolase (156 aa).

Residues 76-78, N89, 93-95, and K103 contribute to the substrate site; these read RSG and TVD.

This sequence belongs to the dUTPase family. It depends on Mg(2+) as a cofactor.

It carries out the reaction dUTP + H2O = dUMP + diphosphate + H(+). The protein operates within pyrimidine metabolism; dUMP biosynthesis; dUMP from dCTP (dUTP route): step 2/2. This enzyme is involved in nucleotide metabolism: it produces dUMP, the immediate precursor of thymidine nucleotides and it decreases the intracellular concentration of dUTP so that uracil cannot be incorporated into DNA. The protein is Deoxyuridine 5'-triphosphate nucleotidohydrolase of Agrobacterium fabrum (strain C58 / ATCC 33970) (Agrobacterium tumefaciens (strain C58)).